The sequence spans 437 residues: Epsilon-sarcoglycan (437 aa).

Residues 1–317 (MLLFWWWELG…LKSRDYYTDF (317 aa)) are Extracellular-facing. Asn200 carries an N-linked (GlcNAc...) asparagine glycan. A helical transmembrane segment spans residues 318–338 (LVTLAVPSAVALVLFLILAYI). At 339–437 (MCCRREGVEK…QPQTTGKWYP (99 aa)) the chain is on the cytoplasmic side.

The protein belongs to the sarcoglycan alpha/epsilon family. In terms of processing, N-glycosylated. Post-translationally, ubiquitinated, leading to its degradation by the proteasome. In terms of tissue distribution, identified in all tissues tested. Expression highest in lung and placenta, moderate in brain, heart and skeletal muscle, low in kidney and liver. Also detected in embryo.

It is found in the cell membrane. The protein localises to the sarcolemma. Its subcellular location is the golgi apparatus. It localises to the cell projection. The protein resides in the dendrite. It is found in the cytoplasm. The protein localises to the cytoskeleton. Its function is as follows. Component of the sarcoglycan complex, a subcomplex of the dystrophin-glycoprotein complex which forms a link between the F-actin cytoskeleton and the extracellular matrix. This is Epsilon-sarcoglycan (Sgce) from Mus musculus (Mouse).